Here is a 207-residue protein sequence, read N- to C-terminus: Thymidine kinase (207 aa).

Residues Gly15–Ser22 and Asp88–Gln91 contribute to the ATP site. Residue Glu89 is the Proton acceptor of the active site. Zn(2+) is bound by residues Cys145, Cys148, Cys183, and His186.

It belongs to the thymidine kinase family. In terms of assembly, homotetramer.

Its subcellular location is the cytoplasm. The catalysed reaction is thymidine + ATP = dTMP + ADP + H(+). The protein is Thymidine kinase of Oceanobacillus iheyensis (strain DSM 14371 / CIP 107618 / JCM 11309 / KCTC 3954 / HTE831).